The chain runs to 205 residues: Nuclear transcription factor Y subunit beta (205 aa).

Residues Met1–Phe50 are a domain. Residues His24–Phe50 are disordered. The segment covering Met37–Phe50 has biased composition (basic and acidic residues). Residues Arg51 to Arg140 form a b domain region. The DNA-binding element occupies Leu57–Ala63. Residues Val84–Ile95 form a subunit association domain (SAD) region. Residues Glu141–Gln201 are c domain.

It belongs to the NFYB/HAP3 subunit family. As to quaternary structure, heterotrimeric transcription factor composed of three components, NF-YA, NF-YB and NF-YC. NF-YB and NF-YC must interact and dimerize for NF-YA association and DNA binding.

It localises to the nucleus. Functionally, component of the sequence-specific heterotrimeric transcription factor (NF-Y) which specifically recognizes a 5'-CCAAT-3' box motif found in the promoters of its target genes. NF-Y can function as both an activator and a repressor, depending on its interacting cofactors. The sequence is that of Nuclear transcription factor Y subunit beta (NFYB) from Gallus gallus (Chicken).